Reading from the N-terminus, the 33-residue chain is Beta-theraphotoxin-Cm1a (33 aa).

3 cysteine pairs are disulfide-bonded: C2–C17, C9–C22, and C16–C29. At L33 the chain carries Leucine amide.

This sequence belongs to the neurotoxin 10 (Hwtx-1) family. 04 (CcoTx1) subfamily. As to expression, expressed by the venom gland.

Its subcellular location is the secreted. In terms of biological role, inhibits many voltage-gated sodium channels and one voltage-gated calcium channel (Cav2.2/CACNA1B (IC(50)=400 nM), Nav1.2/SCN2A (IC(50)=3-70 nM), Nav1.1/SCN1A (IC(50)=523-1060 nM), Nav1.7/SCN9A (IC(50)=129.1-5120 nM), Nav1.4/SCN4A (IC(50)=263-888 nM or &gt;10 uM) and Nav1.5/SCN5A (IC(50)=188-323 nM or &gt;10 uM)). It acts by shifting the voltage dependence of channel activation to more depolarized potentials and by blocking the inward component of the sodium current. It shows moderate affinity for lipid bilayers. On Nav1.7/SCN9A, it has been shown to interact with the S3-S4 loop of domain DII (site 4). Is significantly more potent against Nav1.2/SCN2A than the other Nav channel subtypes. In vivo, this toxin causes general ataxia, lack of response to stimuli, and semiparalysis. After a few minutes, the mice are unable to stand, and breathing is reduced in rhythm and intensity. Symptoms gradually increase with progressive slowing of breathing and flaccid paralysis, death occurred within 10 to 20 minutes post injection. Animals remain totally flaccid, and no symptoms of excitatory neurotoxicity are observed. The sequence is that of Beta-theraphotoxin-Cm1a from Ceratogyrus marshalli (Straighthorned baboon tarantula).